The primary structure comprises 322 residues: Tyrosine recombinase XerC (322 aa).

A Core-binding (CB) domain is found at 14–104; it reads PDLREAAAAW…ALRSFARHLD (91 aa). Positions 125 to 311 constitute a Tyr recombinase domain; the sequence is RLPRPLPVAA…DSARLLSAFD (187 aa). Active-site residues include R170, K195, H263, R266, and H289. Catalysis depends on Y298, which acts as the O-(3'-phospho-DNA)-tyrosine intermediate.

Belongs to the 'phage' integrase family. XerC subfamily. In terms of assembly, forms a cyclic heterotetrameric complex composed of two molecules of XerC and two molecules of XerD.

The protein localises to the cytoplasm. In terms of biological role, site-specific tyrosine recombinase, which acts by catalyzing the cutting and rejoining of the recombining DNA molecules. The XerC-XerD complex is essential to convert dimers of the bacterial chromosome into monomers to permit their segregation at cell division. It also contributes to the segregational stability of plasmids. This Methylobacterium nodulans (strain LMG 21967 / CNCM I-2342 / ORS 2060) protein is Tyrosine recombinase XerC.